A 306-amino-acid polypeptide reads, in one-letter code: MATH domain and coiled-coil domain-containing protein At3g29580 (306 aa).

One can recognise an MATH domain in the interval 6–132 (DNKFTWVIKN…NGEIKIVVEF (127 aa)). The stretch at 253-298 (FKLDWLEKKLNEVLEKKEKEESYETRMREIEEEMKDLKAKALDVGA) forms a coiled coil.

The chain is MATH domain and coiled-coil domain-containing protein At3g29580 from Arabidopsis thaliana (Mouse-ear cress).